The following is a 90-amino-acid chain: UPF0237 protein NMA1909 (90 aa).

In terms of domain architecture, ACT spans Val5–Ile83.

The protein belongs to the UPF0237 family.

In Neisseria meningitidis serogroup A / serotype 4A (strain DSM 15465 / Z2491), this protein is UPF0237 protein NMA1909.